We begin with the raw amino-acid sequence, 200 residues long: Cysteine-rich venom protein VAR8 (200 aa).

An N-terminal signal peptide occupies residues 1–22; that stretch reads MILLKLYLTLAAILCQSRGTTS. In terms of domain architecture, SCP spans 41–169; the sequence is NKHNDLRRTV…PLKYFLVCQY (129 aa). Cystine bridges form between Cys-77–Cys-156, Cys-95–Cys-170, Cys-151–Cys-167, and Cys-189–Cys-196.

This sequence belongs to the CRISP family. In terms of processing, contains 8 disulfide bonds. In terms of tissue distribution, expressed by the venom gland.

The protein localises to the secreted. Its function is as follows. Blocks ryanodine receptors, and potassium channels. This Varanus acanthurus (Ridge-tailed monitor) protein is Cysteine-rich venom protein VAR8.